A 2167-amino-acid chain; its full sequence is SH3 and multiple ankyrin repeat domains protein 1 (2167 aa).

Residues 1–63 are disordered; sequence MTHSPATSED…TRGLQGRSMS (63 aa). Positions 17 to 32 are enriched in low complexity; sequence SECPEGGSESDSSPDG. Residues 33 to 47 show a composition bias toward gly residues; sequence PGRGPQGTRGRGSGA. Position 43 is an omega-N-methylarginine (Arg-43). The residue at position 186 (Tyr-186) is a Phosphotyrosine. ANK repeat units lie at residues 212–242, 246–275, 279–309, 313–342, 346–375, and 379–407; these read SGET…HIDF, DGMT…SPNY, RGLT…QLGI, NGWQ…EPGA, SGNT…NKDV, and NGQT…EQDV. Disordered regions lie at residues 413 to 432 and 454 to 546; these read SPKY…TVPP and PGAS…SRGR. Low complexity predominate over residues 454 to 479; the sequence is PGASSSGTPGPTSGSQGQSQPSAPST. Residues 527-542 show a composition bias toward gly residues; the sequence is PAGGTGGSGGPGGSLG. Ser-540 is modified (phosphoserine). Arg-544 carries the omega-N-methylarginine modification. An SH3 domain is found at 554 to 613; sequence VPGRSFMAVKSYQAQGEGEISLSKGEKIKVLSIGEGGFWEGQVKGRVGWFPSDCLEEVAN. Residues 663-757 form the PDZ domain; sequence TVLLQKKDSE…TLMVKVVMVT (95 aa). Phosphoserine is present on residues Ser-671 and Ser-791. The interval 841–894 is disordered; sequence ISASESPGPGGLASLGKHRPKGFFATESSFDPHHRSQPSYDRPSFLPPGPGLML. Ser-898 carries the phosphoserine modification. 2 disordered regions span residues 917 to 1233 and 1245 to 1290; these read SRSL…LDFT and RREG…RHSK. Residues 928-947 show a composition bias toward pro residues; the sequence is IPPPPTTSPPEPPYSTPPAP. Arg-958 bears the Omega-N-methylarginine mark. The span at 969 to 980 shows a compositional bias: low complexity; that stretch reads PLPASSPSSFDG. Residues 1004 to 1028 show a composition bias toward basic residues; it reads AHHHPPHHHHHHAPPPQPHHHHAHP. At Arg-1059 the chain carries Omega-N-methylarginine. Residues 1064–1089 are compositionally biased toward low complexity; sequence SPTSGAPSPSHHSSSGGSSGPAQAPA. Omega-N-methylarginine occurs at positions 1098 and 1109. 2 stretches are compositionally biased toward low complexity: residues 1132–1146 and 1171–1184; these read SLPP…ALPR and STSS…GSST. Residues 1203 to 1224 are compositionally biased toward pro residues; that stretch reads SPAPATSPVPPSPSPVPTPASP. Positions 1245-1256 are enriched in basic and acidic residues; the sequence is RREGGWQNEARR. Arg-1257 carries the post-translational modification Asymmetric dimethylarginine. The residue at position 1291 (Ser-1291) is a Phosphoserine. 8 disordered regions span residues 1308–1331, 1361–1417, 1429–1458, 1500–1725, 1740–1790, 1828–1866, 1898–1988, and 2002–2029; these read GGSS…GSSS, LAAR…VLRL, RAGL…PPTA, FLEN…AGVA, GQAF…TPTS, VPPV…QPQA, PWAR…STRH, and RRAP…LPIL. A compositionally biased stretch (basic and acidic residues) spans 1363–1372; sequence ARERALKESS. Residues 1378-1395 show a composition bias toward pro residues; sequence PQPPPRPPSPRYDAPPPT. A compositionally biased stretch (basic residues) spans 1396-1408; that stretch reads LHHHSPHSPHSPH. Arg-1429 is subject to Omega-N-methylarginine. A Phosphoserine modification is found at Ser-1442. Over residues 1530 to 1541 the composition is skewed to low complexity; the sequence is RRVLPTSPTSPR. The span at 1589–1615 shows a compositional bias: pro residues; sequence PLTPGPPHPLPDPPSPATPLPAAPPPA. Over residues 1624-1641 the composition is skewed to polar residues; the sequence is DSTASSLTSYDSEVATLT. A compositionally biased stretch (pro residues) spans 1648–1676; it reads PGDPPAPGPPAPAAPAPPAPQPGPDPPPG. Over residues 1684-1694 the composition is skewed to basic and acidic residues; the sequence is VDSRSSSDHPL. The span at 1695–1708 shows a compositional bias: low complexity; the sequence is ETISSASTLSSLSA. Residues 1709–1724 are compositionally biased toward gly residues; sequence EGGGNTGGVAGGGAGV. The span at 1850-1861 shows a compositional bias: pro residues; that stretch reads PGPPPPPLPGPL. At Arg-1901 the chain carries Omega-N-methylarginine. 3 stretches are compositionally biased toward low complexity: residues 1934–1945, 1960–1985, and 2002–2012; these read SQTSLLSKPSSS, TGSG…ASAS, and RRAPSPSLLPA. An omega-N-methylarginine mark is found at Arg-2022, Arg-2042, and Arg-2080. One can recognise an SAM domain in the interval 2104–2167; the sequence is WTKFDVADWL…DRALKFFLER (64 aa).

This sequence belongs to the SHANK family. In terms of assembly, may homomultimerize via its SAM domain. Interacts with the C-terminus of SSTR2 via the PDZ domain. Interacts with SHARPIN, SPTAN1, HOMER1 and DLGAP1/GKAP. Part of a complex with DLG4/PSD-95 and DLGAP1/GKAP. Interacts with BAIAP2. Interacts with IGSF9. Interacts with HOMER1 and HOMER3. As to expression, in brain, highly expressed in cortex, hippocampus and cerebellum.

Its subcellular location is the cytoplasm. The protein localises to the synapse. The protein resides in the postsynaptic density. Seems to be an adapter protein in the postsynaptic density (PSD) of excitatory synapses that interconnects receptors of the postsynaptic membrane including NMDA-type and metabotropic glutamate receptors, and the actin-based cytoskeleton. Plays a role in the structural and functional organization of the dendritic spine and synaptic junction. Overexpression promotes maturation of dendritic spines and the enlargement of spine heads via its ability to recruit Homer to postsynaptic sites, and enhances presynaptic function. This is SH3 and multiple ankyrin repeat domains protein 1 (Shank1) from Mus musculus (Mouse).